The primary structure comprises 214 residues: Imidazole glycerol phosphate synthase subunit HisH (214 aa).

The Glutamine amidotransferase type-1 domain maps to 2-214; that stretch reads RVALIDYGSG…LIANFLRWAP (213 aa). Cys-88 functions as the Nucleophile in the catalytic mechanism. Residues His-194 and Glu-196 contribute to the active site.

In terms of assembly, heterodimer of HisH and HisF.

It localises to the cytoplasm. It carries out the reaction 5-[(5-phospho-1-deoxy-D-ribulos-1-ylimino)methylamino]-1-(5-phospho-beta-D-ribosyl)imidazole-4-carboxamide + L-glutamine = D-erythro-1-(imidazol-4-yl)glycerol 3-phosphate + 5-amino-1-(5-phospho-beta-D-ribosyl)imidazole-4-carboxamide + L-glutamate + H(+). The enzyme catalyses L-glutamine + H2O = L-glutamate + NH4(+). The protein operates within amino-acid biosynthesis; L-histidine biosynthesis; L-histidine from 5-phospho-alpha-D-ribose 1-diphosphate: step 5/9. IGPS catalyzes the conversion of PRFAR and glutamine to IGP, AICAR and glutamate. The HisH subunit catalyzes the hydrolysis of glutamine to glutamate and ammonia as part of the synthesis of IGP and AICAR. The resulting ammonia molecule is channeled to the active site of HisF. In Rhodospirillum rubrum (strain ATCC 11170 / ATH 1.1.1 / DSM 467 / LMG 4362 / NCIMB 8255 / S1), this protein is Imidazole glycerol phosphate synthase subunit HisH.